Consider the following 509-residue polypeptide: Steroid 17-alpha-hydroxylase/17,20 lyase (509 aa).

Asn202 serves as a coordination point for substrate. A heme-binding site is contributed by Cys442.

This sequence belongs to the cytochrome P450 family. The cofactor is heme.

The protein resides in the endoplasmic reticulum membrane. Its subcellular location is the microsome membrane. The enzyme catalyses a C21-steroid + reduced [NADPH--hemoprotein reductase] + O2 = a 17alpha-hydroxy-C21-steroid + oxidized [NADPH--hemoprotein reductase] + H2O + H(+). It carries out the reaction progesterone + reduced [NADPH--hemoprotein reductase] + O2 = 17alpha-hydroxyprogesterone + oxidized [NADPH--hemoprotein reductase] + H2O + H(+). The catalysed reaction is pregnenolone + reduced [NADPH--hemoprotein reductase] + O2 = 17alpha-hydroxypregnenolone + oxidized [NADPH--hemoprotein reductase] + H2O + H(+). It catalyses the reaction 17alpha-hydroxyprogesterone + reduced [NADPH--hemoprotein reductase] + O2 = androst-4-ene-3,17-dione + acetate + oxidized [NADPH--hemoprotein reductase] + H2O + 2 H(+). The enzyme catalyses 17alpha-hydroxyprogesterone + reduced [NADPH--hemoprotein reductase] + O2 = 16alpha,17alpha-dihydroxyprogesterone + oxidized [NADPH--hemoprotein reductase] + H2O + H(+). It carries out the reaction 16alpha,17alpha-dihydroxyprogesterone + reduced [NADPH--hemoprotein reductase] + O2 = 6beta,16alpha,17alpha-trihydroxyprogesterone + oxidized [NADPH--hemoprotein reductase] + H2O + H(+). The catalysed reaction is 17alpha-hydroxypregnenolone + reduced [NADPH--hemoprotein reductase] + O2 = 3beta-hydroxyandrost-5-en-17-one + acetate + oxidized [NADPH--hemoprotein reductase] + H2O + 2 H(+). It catalyses the reaction 16alpha,17alpha-dihydroxypregnenolone + reduced [NADPH--hemoprotein reductase] + O2 = 3beta,16alpha-dihydroxy-androst-5-en-17-one + acetate + oxidized [NADPH--hemoprotein reductase] + H2O + 2 H(+). The enzyme catalyses 3beta-hydroxyandrost-5-en-17-one + reduced [NADPH--hemoprotein reductase] + O2 = 3beta,16alpha-dihydroxy-androst-5-en-17-one + oxidized [NADPH--hemoprotein reductase] + H2O + H(+). It carries out the reaction androst-4-ene-3,17-dione + reduced [NADPH--hemoprotein reductase] + O2 = 16alpha-hydroxyandrost-4-ene-3,17-dione + oxidized [NADPH--hemoprotein reductase] + H2O + H(+). It participates in steroid hormone biosynthesis. Its pathway is steroid biosynthesis; glucocorticoid biosynthesis. With respect to regulation, regulated predominantly by intracellular cAMP levels. The 17,20-lyase activity is stimulated by cytochrome b5, which acts as an allosteric effector increasing the Vmax of the lyase activity. A cytochrome P450 monooxygenase involved in corticoid and androgen biosynthesis. Catalyzes 17-alpha hydroxylation of C21 steroids, which is common for both pathways. A second oxidative step, required only for androgen synthesis, involves an acyl-carbon cleavage. The 17-alpha hydroxy intermediates, as part of adrenal glucocorticoids biosynthesis pathway, are precursors of cortisol. Hydroxylates steroid hormones, pregnenolone and progesterone to form 17-alpha hydroxy metabolites, followed by the cleavage of the C17-C20 bond to form C19 steroids, dehydroepiandrosterone (DHEA) and androstenedione. Has 16-alpha hydroxylase activity. Catalyzes 16-alpha hydroxylation of 17-alpha hydroxy pregnenolone, followed by the cleavage of the C17-C20 bond to form 16-alpha-hydroxy DHEA. Also 16-alpha hydroxylates androgens, relevant for estriol synthesis. Mechanistically, uses molecular oxygen inserting one oxygen atom into a substrate, and reducing the second into a water molecule, with two electrons provided by NADPH via cytochrome P450 reductase (CPR; NADPH-ferrihemoprotein reductase). The protein is Steroid 17-alpha-hydroxylase/17,20 lyase (CYP17A1) of Sus scrofa (Pig).